The chain runs to 559 residues: MAVACSPEKDQSLLQLQKVDSSRVILSPVLSSPMETNQPICIPSPYTDRGHDFPTIPFYSATNFSYANPPAISDRPSVHQTLSPSLFWPSHGHVGTTLPLHHLQARPQHGQAVQSPWVELSPLDNVLTSSKSARRRSQENEEGEVSSGGKADLHFCAVCHDYASGYHYGVWSCEGCKAFFKRSIQRHNDYICPATNQCTIDKNRRKSCQACRLHKCYNVGMTKCGMRKERGNFRDPQMRRVTRLSSQGRTSGPSVLNGPAVGPLNTPQPPALTSKQLIERIMEAEPPEIYLMKDMRRPLTEANIMMSLTNLADKELVHMITWAKKIPGFLELGLLDQVHLLECCWLEVLMIGLMWRSVDHPGKLIFSPDLSLSREEGSCVQGFLEIFDMLIAATSRVRELKLQREEYVCLKAMILLNSNMCLSSSEGSEELQSRSKLLRLLDAVTDALVWAIAKTGLTFRQQYTRLAHLLMLLSHIRHVSNKGMDHLHGMKMKNMVPLYDLLLEMLDAHIMHSSRLPRRSPQQETVEQCDAPARPHSPGTSGPTNTWTPSCTGGRGEPQ.

Residues 1–155 (MAVACSPEKD…SSGGKADLHF (155 aa)) form a modulating region. The interval 128 to 148 (TSSKSARRRSQENEEGEVSSG) is disordered. 2 NR C4-type zinc fingers span residues 156–176 (CAVCHDYASGYHYGVWSCEGC) and 192–216 (CPATNQCTIDKNRRKSCQACRLHKC). A DNA-binding region (nuclear receptor) is located at residues 156–221 (CAVCHDYASG…RLHKCYNVGM (66 aa)). Positions 243–254 (RLSSQGRTSGPS) are enriched in polar residues. The segment at 243-269 (RLSSQGRTSGPSVLNGPAVGPLNTPQP) is disordered. The NR LBD domain maps to 273-509 (TSKQLIERIM…DLLLEMLDAH (237 aa)). Residues 514–559 (SRLPRRSPQQETVEQCDAPARPHSPGTSGPTNTWTPSCTGGRGEPQ) form a disordered region. Over residues 538-551 (PGTSGPTNTWTPSC) the composition is skewed to polar residues.

The protein belongs to the nuclear hormone receptor family. NR3 subfamily. Binds DNA as a homodimer. Can form a heterodimer with ER-alpha.

Its subcellular location is the nucleus. Its function is as follows. Binds estrogens with an affinity similar to that of ER-alpha, and activates expression of reporter genes containing estrogen response elements (ERE) in an estrogen-dependent manner. This Sparus aurata (Gilthead sea bream) protein is Estrogen receptor beta (esr2).